Here is a 132-residue protein sequence, read N- to C-terminus: MGLGFKCRHIPPSVYCGGKKRRRRRSKRRRSRCGRSRRRKSCRGGRKTNNPFLNYLRVFRKKHCGWPQCRIAIEGAKCWCKMSGRDRKKYYNQACSMLKKRGRRRRRRSCRRRRRSCRRRRRRRRSCNTCPK.

Disordered stretches follow at residues 17-46 and 96-115; these read GGKKRRRRRSKRRRSRCGRSRRRKSCRGGR and SMLKKRGRRRRRRSCRRRRR. Composition is skewed to basic residues over residues 18 to 46 and 98 to 115; these read GKKRRRRRSKRRRSRCGRSRRRKSCRGGR and LKKRGRRRRRRSCRRRRR.

It belongs to the UPF0771 family. Testis.

The protein resides in the nucleus. It is found in the chromosome. Protamines substitute for histones in the chromatin of sperm during the haploid phase of spermatogenesis. They compact sperm DNA into a highly condensed, stable and inactive complex. The polypeptide is Protamine (Anthonomus grandis (Mexican cotton boll weevil)).